A 952-amino-acid polypeptide reads, in one-letter code: UvrABC system protein A (952 aa).

38–45 (GLSGSGKS) contributes to the ATP binding site. The C4-type zinc finger occupies 259–286 (CDKCGFSISELEPRLFSFNSPLGSCSYC). 2 ABC transporter domains span residues 316-595 (FKNI…SNSI) and 615-944 (GNGK…QYLS). Residue 647–654 (GVSGSGKS) coordinates ATP. A C4-type zinc finger spans residues 746-772 (CDKCFGDGVIRIEMHFLPDVYVKCEVC).

It belongs to the ABC transporter superfamily. UvrA family. Forms a heterotetramer with UvrB during the search for lesions.

The protein resides in the cytoplasm. In terms of biological role, the UvrABC repair system catalyzes the recognition and processing of DNA lesions. UvrA is an ATPase and a DNA-binding protein. A damage recognition complex composed of 2 UvrA and 2 UvrB subunits scans DNA for abnormalities. When the presence of a lesion has been verified by UvrB, the UvrA molecules dissociate. The protein is UvrABC system protein A of Mycoplasma genitalium (strain ATCC 33530 / DSM 19775 / NCTC 10195 / G37) (Mycoplasmoides genitalium).